An 82-amino-acid chain; its full sequence is Small ribosomal subunit protein bS16 (82 aa).

It belongs to the bacterial ribosomal protein bS16 family.

In Klebsiella pneumoniae (strain 342), this protein is Small ribosomal subunit protein bS16.